The primary structure comprises 522 residues: Subtilisin-like protease 10 (522 aa).

An N-terminal signal peptide occupies residues 1-19 (MFFFKGVVAVLSFFSAVNA). A propeptide spanning residues 20-117 (APFMKPNNGT…VERDQIGTSQ (98 aa)) is cleaved from the precursor. Residues 36–113 (SYIVLLKRDI…HVAHVERDQI (78 aa)) enclose the Inhibitor I9 domain. The region spanning 127–405 (NWGLGRLSNN…KLLVNGANGT (279 aa)) is the Peptidase S8 domain. Active-site charge relay system residues include Asp159 and His190. The N-linked (GlcNAc...) asparagine glycan is linked to Asn251. Catalysis depends on Ser348, which acts as the Charge relay system. Over residues 384–397 (ASVKNPGPNTTNKL) the composition is skewed to polar residues. Residues 384–515 (ASVKNPGPNT…GWNRPMWWNR (132 aa)) form a disordered region. N-linked (GlcNAc...) asparagine glycans are attached at residues Asn392 and Asn403. Residues 432–459 (SQNPPPGQNPPPGQNPPPEQPAPSPPAN) show a composition bias toward pro residues.

It belongs to the peptidase S8 family.

It is found in the secreted. Secreted subtilisin-like serine protease with keratinolytic activity that contributes to pathogenicity. The sequence is that of Subtilisin-like protease 10 (SUB10) from Arthroderma benhamiae (strain ATCC MYA-4681 / CBS 112371) (Trichophyton mentagrophytes).